Consider the following 253-residue polypeptide: 5'-nucleotidase SurE (253 aa).

A divalent metal cation-binding residues include Asp-8, Asp-9, Ser-40, and Asn-93.

The protein belongs to the SurE nucleotidase family. A divalent metal cation is required as a cofactor.

It localises to the cytoplasm. It carries out the reaction a ribonucleoside 5'-phosphate + H2O = a ribonucleoside + phosphate. Its function is as follows. Nucleotidase that shows phosphatase activity on nucleoside 5'-monophosphates. The protein is 5'-nucleotidase SurE of Haemophilus ducreyi (strain 35000HP / ATCC 700724).